The sequence spans 620 residues: Probable potassium transport system protein Kup 2 (620 aa).

The next 12 membrane-spanning stretches (helical) occupy residues 10–30, 50–70, 102–122, 136–156, 168–188, 211–231, 246–266, 284–304, 336–356, 368–388, 393–413, and 415–435; these read LLVS…LYAL, VLSL…VIVI, MMLG…TPAI, PDLR…LFAI, FGPV…VNVI, LMSF…EALY, WFCL…ALLI, MVVP…QAVI, IYVP…VVGF, IAVT…MALL, MALV…FFSA, and IIKV…SFTV.

Belongs to the HAK/KUP transporter (TC 2.A.72) family.

It localises to the cell inner membrane. The catalysed reaction is K(+)(in) + H(+)(in) = K(+)(out) + H(+)(out). Functionally, transport of potassium into the cell. Likely operates as a K(+):H(+) symporter. The chain is Probable potassium transport system protein Kup 2 from Rhodopseudomonas palustris (strain BisB5).